The primary structure comprises 296 residues: Hca operon transcriptional activator HcaR (296 aa).

The HTH lysR-type domain maps to 1–58 (MELRHLRYFVAVAQALNFTRAAEKLHTSQPSLSSQIRDLENCVGVPLLVRDKRKVALT). Residues 18–38 (FTRAAEKLHTSQPSLSSQIRD) constitute a DNA-binding region (H-T-H motif).

It belongs to the LysR transcriptional regulatory family.

In terms of biological role, transcriptional activator of the hca operon for 3-phenylpropionic acid catabolism. The protein is Hca operon transcriptional activator HcaR (hcaR) of Escherichia coli (strain K12).